Consider the following 117-residue polypeptide: uncharacterized protein (117 aa).

This is an uncharacterized protein from Bacillus subtilis (strain 168).